The following is a 615-amino-acid chain: Putative binding protein BruAb2_0648 (615 aa).

The signal sequence occupies residues Met-1–Ala-29.

This sequence belongs to the bacterial solute-binding protein 5 family.

It is found in the periplasm. This chain is Putative binding protein BruAb2_0648, found in Brucella abortus biovar 1 (strain 9-941).